A 156-amino-acid chain; its full sequence is Small ribosomal subunit protein uS7c (156 aa).

Belongs to the universal ribosomal protein uS7 family. As to quaternary structure, part of the 30S ribosomal subunit.

The protein localises to the plastid. Its subcellular location is the chloroplast. Its function is as follows. One of the primary rRNA binding proteins, it binds directly to 16S rRNA where it nucleates assembly of the head domain of the 30S subunit. This Ostreococcus tauri protein is Small ribosomal subunit protein uS7c (rps7).